Consider the following 242-residue polypeptide: Trypsin-1 (242 aa).

An N-terminal signal peptide occupies residues 1–15; that stretch reads MISLVFVLLIGAAFA. Positions 16–20 are cleaved as a propeptide — activation peptide; it reads TEDDK. The Peptidase S1 domain occupies 21–240; the sequence is IVGGYECKAY…FNDWLTSTMA (220 aa). 6 cysteine pairs are disulfide-bonded: Cys27-Cys156, Cys45-Cys61, Cys129-Cys229, Cys136-Cys202, Cys167-Cys181, and Cys192-Cys216. His60 (charge relay system) is an active-site residue. Ca(2+) contacts are provided by Glu72, Asn74, Val77, and Glu82. Asp104 (charge relay system) is an active-site residue. Catalysis depends on Ser196, which acts as the Charge relay system.

It belongs to the peptidase S1 family. Requires Ca(2+) as cofactor.

It localises to the secreted. Its subcellular location is the extracellular space. It carries out the reaction Preferential cleavage: Arg-|-Xaa, Lys-|-Xaa.. The protein is Trypsin-1 of Salmo salar (Atlantic salmon).